An 86-amino-acid polypeptide reads, in one-letter code: Small ribosomal subunit protein uS17 (86 aa).

Belongs to the universal ribosomal protein uS17 family. Part of the 30S ribosomal subunit.

One of the primary rRNA binding proteins, it binds specifically to the 5'-end of 16S ribosomal RNA. This Streptococcus pyogenes serotype M6 (strain ATCC BAA-946 / MGAS10394) protein is Small ribosomal subunit protein uS17.